A 322-amino-acid chain; its full sequence is Lipoyl synthase (322 aa).

The [4Fe-4S] cluster site is built by C68, C73, C79, C94, C98, C101, and S309. Residues 80 to 298 enclose the Radical SAM core domain; that stretch reads FNHGTASFMI…RVAGVEMGFS (219 aa).

The protein belongs to the radical SAM superfamily. Lipoyl synthase family. It depends on [4Fe-4S] cluster as a cofactor.

The protein localises to the cytoplasm. The catalysed reaction is [[Fe-S] cluster scaffold protein carrying a second [4Fe-4S](2+) cluster] + N(6)-octanoyl-L-lysyl-[protein] + 2 oxidized [2Fe-2S]-[ferredoxin] + 2 S-adenosyl-L-methionine + 4 H(+) = [[Fe-S] cluster scaffold protein] + N(6)-[(R)-dihydrolipoyl]-L-lysyl-[protein] + 4 Fe(3+) + 2 hydrogen sulfide + 2 5'-deoxyadenosine + 2 L-methionine + 2 reduced [2Fe-2S]-[ferredoxin]. Its pathway is protein modification; protein lipoylation via endogenous pathway; protein N(6)-(lipoyl)lysine from octanoyl-[acyl-carrier-protein]: step 2/2. Functionally, catalyzes the radical-mediated insertion of two sulfur atoms into the C-6 and C-8 positions of the octanoyl moiety bound to the lipoyl domains of lipoate-dependent enzymes, thereby converting the octanoylated domains into lipoylated derivatives. The chain is Lipoyl synthase from Idiomarina loihiensis (strain ATCC BAA-735 / DSM 15497 / L2-TR).